A 207-amino-acid chain; its full sequence is ATP phosphoribosyltransferase (207 aa).

The protein belongs to the ATP phosphoribosyltransferase family. Short subfamily. Heteromultimer composed of HisG and HisZ subunits.

It is found in the cytoplasm. It catalyses the reaction 1-(5-phospho-beta-D-ribosyl)-ATP + diphosphate = 5-phospho-alpha-D-ribose 1-diphosphate + ATP. It functions in the pathway amino-acid biosynthesis; L-histidine biosynthesis; L-histidine from 5-phospho-alpha-D-ribose 1-diphosphate: step 1/9. Its function is as follows. Catalyzes the condensation of ATP and 5-phosphoribose 1-diphosphate to form N'-(5'-phosphoribosyl)-ATP (PR-ATP). Has a crucial role in the pathway because the rate of histidine biosynthesis seems to be controlled primarily by regulation of HisG enzymatic activity. This is ATP phosphoribosyltransferase from Geobacillus kaustophilus (strain HTA426).